The primary structure comprises 370 residues: MTTPTPLRSVTVNTPPPYTIAIGPGLLHDPPRLAATIRGRHALILSDSEVAPRYAAQLHETLLRARPDLHLNVFTLPAGETSKSLENFGAAIAQLATLGATRDACLFALGGGVIGDLAGFTAACWMRGIDYVQVPTTLLAMVDSSVGGKTAVDIPQGKNMVGAFHPPRAVIADTDTLATLPLRELRAGLSEVIKYGAIRDPVFFHWLQTTREALLARDPAALAQAIARSCEHKADIVGRDPLEKGERVLLNLGHTFGHAIETTQGYSTPGSNNLNHGEAVAVGMVLAARLSNTLGLAPAEDTETLKNLLDAYGLPTVLPSGLTPEMLLERMRLDKKNIAGRLRLVLWRGIGHAEAVPDVDEAAVRQILAN.

Residues 112-116 (GVIGD), 136-137 (TT), Lys149, Lys158, and 176-179 (TLAT) contribute to the NAD(+) site. Zn(2+) is bound by residues Glu191, His254, and His276.

It belongs to the sugar phosphate cyclases superfamily. Dehydroquinate synthase family. The cofactor is Co(2+). Zn(2+) serves as cofactor. Requires NAD(+) as cofactor.

It is found in the cytoplasm. The enzyme catalyses 7-phospho-2-dehydro-3-deoxy-D-arabino-heptonate = 3-dehydroquinate + phosphate. Its pathway is metabolic intermediate biosynthesis; chorismate biosynthesis; chorismate from D-erythrose 4-phosphate and phosphoenolpyruvate: step 2/7. Functionally, catalyzes the conversion of 3-deoxy-D-arabino-heptulosonate 7-phosphate (DAHP) to dehydroquinate (DHQ). The chain is 3-dehydroquinate synthase from Xylella fastidiosa (strain M23).